The primary structure comprises 399 residues: MERKNSSRESPRRLSAKVGKGTEMKKVARQLGMAAAESDKDSGFSDGSSECLSSAEQMESEDMLSALGWSREDRPRQNSKTAKNAFPTLSPMVVMKNVLVKQGSSSSQLQSWTVQPSFEVISAQPQLLFLHPPVPSPVSPCHTGEKKSDSRNYLPILNSYTKIAPHPGKRGLSVGPEEKGTSGVQKKICTERLGPSLSSNEPTKAGAVPSSPSTPAPPSAKLAEDSALQGVPSLVAGGSPQTLQPVSSSHVAKAPSLTFASPASPVCASDSTLHGLESNSPLSPLSANYSSPLWAAEHLCRSPDIFSEQRQSKHRRFQNTLVVLHKSGLLEITLKTKELIRQNQATQVELDQLKEQTQLFIEATKSRAPQAWAKLQASLTPGSSNTGSDLEAFSDHPDI.

Basic and acidic residues predominate over residues 1-12 (MERKNSSRESPR). 2 disordered regions span residues 1–85 (MERK…AKNA) and 159–224 (SYTK…KLAE). Ser-213 carries the post-translational modification Phosphoserine. The stretch at 333–359 (TLKTKELIRQNQATQVELDQLKEQTQL) forms a coiled coil. Residues 378–388 (SLTPGSSNTGS) are compositionally biased toward polar residues. The segment at 378-399 (SLTPGSSNTGSDLEAFSDHPDI) is disordered.

Interacts with CLOCK. Forms a ternary complex with the CLOCK-BMAL1 heterodimer. Interacts with CAD and HSPA5.

The protein resides in the nucleus. The protein localises to the cytoplasm. It localises to the cytosol. Its function is as follows. Transcriptional repressor which may act as a negative-feedback regulator of CLOCK-BMAL1 transcriptional activity in the circadian-clock mechanism. May stimulate BMAL1-dependent phosphorylation of CLOCK. However, the physiological relevance of these observations is unsure, since experiments in knockout mice showed that CIPC is not critially required for basic circadian clock. In Pongo abelii (Sumatran orangutan), this protein is CLOCK-interacting pacemaker (CIPC).